Reading from the N-terminus, the 956-residue chain is MDKEKIVIQGARAHNLKNIDVEIPRDKLVVMTGLSGSGKSSLAFDTIYAEGQRRYVESLSAYARQFLGQMDKPDVDLIEGLSPAISIDQKTTSRNPRSTVGTVTEIHDYLRLLYARVGHPVCPNHGIEITSQTIEQMVDRVLEYPEKTRIQIMAPIVSGKKGTHKKTIEEIKKEGYVRIRVDGEIYDINDEIEIEKNKKHSIEIIIDRIVIKEGINTRLYDSIEAALRLADGYAVVDIMGDKELLFSEHYACPYCGFSVGELEPRMFSFNSPFGACPTCDGLGTKLEVDVDTVIPDRSMSLNEGAIIPWRPISSQYYPQMLASACKEFGIDMDTPLEKLSKEELDIILNGSKDKEFYFEYKNDFGMTRETWIPFEGILPNIERRYRETNSDFTRDQMAQYMTDLPCPSCKGYRLKEETLSVKVNDHHIGQISEFSINEALAFFDGLELSEKETQIAAPIFKEVRARLGFLKNVGLDYLTMSRAAGTLSGGEAQRIRLATQIGSRLTGVLYILDEPSIGLHQRDNDRLISTLQSMRDIGNTLIVVEHDEDTMMAADYLIDIGPGAGEHGGRIVAAGTPEEVANNKNSITGDYLSGKKFIPVPAKRRKGNGLELEIIGAKANNLKNVNAKIPLATFSCVTGVSGSGKSSLVNEVLRKALARKLNRNHAKPGEHKEIKGIENLEKIINIDQSPIGRTPRSNPATYTGAFDDIRDLFASTNEAKVRGYKKGRFSFNVKGGRCEACKGDGIIKIEMHFLPDVYVPCEVCHGKRYNGETLDIRYKGKNIAEVLEMTVEEGLEYFTNQPRIARKLQTIVDVGLGYIRLGQPATTLSGGEAQRVKLASELHKRSNGKSFYILDEPTTGLHADDIGRLLKVLQRLVEENGDTVLVIEHNLDVIKQADYLIDLGPEGGDGGGQIIATGTPEKIARSKKSYTGKYLKPILERDKERTEERIATAKKK.

33–40 serves as a coordination point for ATP; that stretch reads GLSGSGKS. Residues 252 to 279 form a C4-type zinc finger; the sequence is CPYCGFSVGELEPRMFSFNSPFGACPTC. ABC transporter domains follow at residues 309–587 and 607–936; these read WRPI…KNSI and GNGL…KYLK. 639-646 lines the ATP pocket; that stretch reads GVSGSGKS. The C4-type zinc finger occupies 738–764; that stretch reads CEACKGDGIIKIEMHFLPDVYVPCEVC.

The protein belongs to the ABC transporter superfamily. UvrA family. Forms a heterotetramer with UvrB during the search for lesions.

Its subcellular location is the cytoplasm. In terms of biological role, the UvrABC repair system catalyzes the recognition and processing of DNA lesions. UvrA is an ATPase and a DNA-binding protein. A damage recognition complex composed of 2 UvrA and 2 UvrB subunits scans DNA for abnormalities. When the presence of a lesion has been verified by UvrB, the UvrA molecules dissociate. The sequence is that of UvrABC system protein A from Listeria monocytogenes serovar 1/2a (strain ATCC BAA-679 / EGD-e).